The following is a 230-amino-acid chain: Potassium/proton antiporter CemA (230 aa).

4 helical membrane passes run 7-27 (LPSL…SSSF), 106-126 (IILH…SFFL), 145-165 (LNDS…VGFH), and 181-201 (FGWA…PVIL).

The protein belongs to the CemA family.

Its subcellular location is the plastid. The protein resides in the chloroplast inner membrane. The catalysed reaction is K(+)(in) + H(+)(out) = K(+)(out) + H(+)(in). In terms of biological role, contributes to K(+)/H(+) antiport activity by supporting proton efflux to control proton extrusion and homeostasis in chloroplasts in a light-dependent manner to modulate photosynthesis. Prevents excessive induction of non-photochemical quenching (NPQ) under continuous-light conditions. Indirectly promotes efficient inorganic carbon uptake into chloroplasts. The polypeptide is Potassium/proton antiporter CemA (Hordeum vulgare (Barley)).